The sequence spans 377 residues: uncharacterized protein (377 aa).

The disordered stretch occupies residues valine 345–aspartate 377.

This is an uncharacterized protein from Schizosaccharomyces pombe (strain 972 / ATCC 24843) (Fission yeast).